A 184-amino-acid polypeptide reads, in one-letter code: Glutathione-regulated potassium-efflux system ancillary protein KefG (184 aa).

It belongs to the NAD(P)H dehydrogenase (quinone) family. KefG subfamily. In terms of assembly, interacts with KefB.

It is found in the cell inner membrane. The catalysed reaction is a quinone + NADH + H(+) = a quinol + NAD(+). The enzyme catalyses a quinone + NADPH + H(+) = a quinol + NADP(+). Regulatory subunit of a potassium efflux system that confers protection against electrophiles. Required for full activity of KefB. The sequence is that of Glutathione-regulated potassium-efflux system ancillary protein KefG from Shigella dysenteriae serotype 1 (strain Sd197).